Reading from the N-terminus, the 265-residue chain is 4-hydroxy-tetrahydrodipicolinate reductase (265 aa).

Residues 7–12, Asp-33, 96–98, and 120–123 each bind NAD(+); these read GASGRM, GTT, and AANF. Catalysis depends on His-153, which acts as the Proton donor/acceptor. Position 154 (His-154) interacts with (S)-2,3,4,5-tetrahydrodipicolinate. Lys-157 (proton donor) is an active-site residue. Residue 163–164 participates in (S)-2,3,4,5-tetrahydrodipicolinate binding; it reads GT.

The protein belongs to the DapB family.

Its subcellular location is the cytoplasm. The catalysed reaction is (S)-2,3,4,5-tetrahydrodipicolinate + NAD(+) + H2O = (2S,4S)-4-hydroxy-2,3,4,5-tetrahydrodipicolinate + NADH + H(+). The enzyme catalyses (S)-2,3,4,5-tetrahydrodipicolinate + NADP(+) + H2O = (2S,4S)-4-hydroxy-2,3,4,5-tetrahydrodipicolinate + NADPH + H(+). It participates in amino-acid biosynthesis; L-lysine biosynthesis via DAP pathway; (S)-tetrahydrodipicolinate from L-aspartate: step 4/4. Catalyzes the conversion of 4-hydroxy-tetrahydrodipicolinate (HTPA) to tetrahydrodipicolinate. The sequence is that of 4-hydroxy-tetrahydrodipicolinate reductase from Cupriavidus taiwanensis (strain DSM 17343 / BCRC 17206 / CCUG 44338 / CIP 107171 / LMG 19424 / R1) (Ralstonia taiwanensis (strain LMG 19424)).